Here is a 227-residue protein sequence, read N- to C-terminus: Urease subunit gamma/beta (227 aa).

The urease gamma stretch occupies residues 1–101; sequence MRLTPTERDR…LAVVADPVGG (101 aa). The tract at residues 102 to 227 is urease beta; it reads GGLGDDAPGA…AACGYLGADR (126 aa).

This sequence in the N-terminal section; belongs to the urease gamma subunit family. It in the C-terminal section; belongs to the urease beta subunit family. In terms of assembly, heterohexamer of 3 UreC (alpha) and 3 UreAB (gamma/beta) subunits.

It localises to the cytoplasm. It catalyses the reaction urea + 2 H2O + H(+) = hydrogencarbonate + 2 NH4(+). It participates in nitrogen metabolism; urea degradation; CO(2) and NH(3) from urea (urease route): step 1/1. In Streptomyces coelicolor (strain ATCC BAA-471 / A3(2) / M145), this protein is Urease subunit gamma/beta.